A 199-amino-acid chain; its full sequence is Recombination protein RecR (199 aa).

Residues 58-73 form a C4-type zinc finger; the sequence is CSICNNITDVDPCTYC. Residues 81–176 enclose the Toprim domain; it reads QVICVVEEPT…RVTRIATGVP (96 aa).

Belongs to the RecR family.

Functionally, may play a role in DNA repair. It seems to be involved in an RecBC-independent recombinational process of DNA repair. It may act with RecF and RecO. In Koribacter versatilis (strain Ellin345), this protein is Recombination protein RecR.